The following is a 210-amino-acid chain: Transcription factor ALC (210 aa).

Residues 1–49 form a disordered region; it reads MGDSDVGDRLPPPSSSDELSSFLRQILSRTPTAQPSSPPKSTNVSSAET. Polar residues predominate over residues 27–48; the sequence is LSRTPTAQPSSPPKSTNVSSAE. Residues 93–142 form the bHLH domain; the sequence is IDAQFHNLSEKKRRSKINEKMKALQKLIPNSNKTDKASMLDEAIEYLKQL.

Homodimer. In terms of tissue distribution, expressed constitutively in roots, leaves, stems, and flowers. Confined to the valve margins of the silique.

It is found in the nucleus. Required for the dehiscence of fruit, especially for the separation of the valve cells from the replum. Promotes the differentiation of a strip of labile nonlignified cells sandwiched between layers of lignified cells. The polypeptide is Transcription factor ALC (ALC) (Arabidopsis thaliana (Mouse-ear cress)).